The sequence spans 362 residues: Ciliary neurotrophic factor receptor subunit alpha (362 aa).

An N-terminal signal peptide occupies residues 1-19 (MANPVPSACCVVLAAVVVV). An Ig-like C2-type domain is found at 23–103 (RHSQQDSHIQ…HLKYQTYLRV (81 aa)). The cysteines at positions 44 and 87 are disulfide-linked. 4 N-linked (GlcNAc...) asparagine glycosylation sites follow: asparagine 58, asparagine 68, asparagine 140, and asparagine 188. Fibronectin type-III domains lie at 106-203 (PPKE…VKPD) and 204-304 (PPES…TEEP). The WSXWS motif motif lies at 288-292 (WSDWS). Aspartate 334 is lipidated: GPI-anchor amidated aspartate. Residues 335-362 (KGAGVGSGAVAVCWTAGLVLAAYGVLFI) constitute a propeptide, removed in mature form.

It belongs to the type I cytokine receptor family. Type 3 subfamily. In terms of assembly, heterotrimer of the alpha subunit, LIFR and IL6ST. As to expression, highly expressed in nervous system. Also found in skeletal muscle.

It localises to the cell membrane. In terms of biological role, binds to CNTF (GPA). The alpha subunit provides the receptor specificity. This is Ciliary neurotrophic factor receptor subunit alpha (CNTFR) from Gallus gallus (Chicken).